Here is a 1105-residue protein sequence, read N- to C-terminus: Mediator of RNA polymerase II transcription subunit 14 (1105 aa).

The tract at residues 28-48 (ASQQANGGIYRNGIGKKSHSP) is disordered.

Belongs to the Mediator complex subunit 14 family. As to quaternary structure, component of the Mediator complex.

Its subcellular location is the nucleus. Component of the Mediator complex, a coactivator involved in the regulated transcription of nearly all RNA polymerase II-dependent genes. Mediator functions as a bridge to convey information from gene-specific regulatory proteins to the basal RNA polymerase II transcription machinery. Mediator is recruited to promoters by direct interactions with regulatory proteins and serves as a scaffold for the assembly of a functional preinitiation complex with RNA polymerase II and the general transcription factors. In Coccidioides immitis (strain RS) (Valley fever fungus), this protein is Mediator of RNA polymerase II transcription subunit 14 (RGR1).